Reading from the N-terminus, the 215-residue chain is 3-demethoxyubiquinol 3-hydroxylase (215 aa).

Glu64, Glu94, His97, Glu146, Glu178, and His181 together coordinate Fe cation.

Belongs to the COQ7 family. The cofactor is Fe cation.

The protein resides in the cell membrane. It catalyses the reaction a 5-methoxy-2-methyl-3-(all-trans-polyprenyl)benzene-1,4-diol + AH2 + O2 = a 3-demethylubiquinol + A + H2O. Its pathway is cofactor biosynthesis; ubiquinone biosynthesis. In terms of biological role, catalyzes the hydroxylation of 2-nonaprenyl-3-methyl-6-methoxy-1,4-benzoquinol during ubiquinone biosynthesis. This is 3-demethoxyubiquinol 3-hydroxylase from Coxiella burnetii (strain Dugway 5J108-111).